We begin with the raw amino-acid sequence, 276 residues long: Glutamate 5-kinase (276 aa).

Position 14 (K14) interacts with ATP. Positions 54, 141, and 157 each coordinate substrate. Residues 177–178 and 219–225 contribute to the ATP site; these read SD and TGGMLTK.

It belongs to the glutamate 5-kinase family.

It is found in the cytoplasm. It catalyses the reaction L-glutamate + ATP = L-glutamyl 5-phosphate + ADP. It participates in amino-acid biosynthesis; L-proline biosynthesis; L-glutamate 5-semialdehyde from L-glutamate: step 1/2. In terms of biological role, catalyzes the transfer of a phosphate group to glutamate to form L-glutamate 5-phosphate. In Listeria monocytogenes serotype 4b (strain CLIP80459), this protein is Glutamate 5-kinase.